Reading from the N-terminus, the 315-residue chain is BTB/POZ domain-containing adapter for CUL3-mediated RhoA degradation protein 3 (315 aa).

Met-1 bears the N-acetylmethionine mark. At Ser-23 the chain carries Phosphoserine. The 69-residue stretch at 32–100 (KYVKLNVGGA…LRDGGVPLPE (69 aa)) folds into the BTB domain. The PCNA-binding signature appears at 239–245 (QTKVEFP). The interval 269-294 (NALLEATGGAAGRSHHLDEDEERERE) is disordered.

This sequence belongs to the BACURD family. Homotetramer; forms a two-fold symmetric tetramer in solution. Interacts with CUL3; interaction is direct and forms a 5:5 heterodecamer. Component of the BCR(BACURD3) E3 ubiquitin ligase complex, at least composed of CUL3, KCTD10/BACURD3 and RBX1. Interacts with DNA polymerase delta subunit 2/POLD2. Interacts with PCNA. Associated with the tectonic-like complex (also named B9 complex); however as Kctd10 has not been identified in all tectonic-like complexes purifications it is unclear whether it is really part of the complex.

The protein localises to the nucleus. Its pathway is protein modification; protein ubiquitination. Its function is as follows. Substrate-specific adapter of a BCR (BTB-CUL3-RBX1) E3 ubiquitin-protein ligase complex. The BCR(BACURD3) E3 ubiquitin ligase complex mediates the ubiquitination of target proteins, leading to their degradation by the proteasome. This is BTB/POZ domain-containing adapter for CUL3-mediated RhoA degradation protein 3 (Kctd10) from Mus musculus (Mouse).